The following is a 31-amino-acid chain: Photosystem II reaction center protein T (31 aa).

The chain crosses the membrane as a helical span at residues 3 to 23 (ALVYTFLLIGTLGIIFFAIFF).

It belongs to the PsbT family. In terms of assembly, PSII is composed of 1 copy each of membrane proteins PsbA, PsbB, PsbC, PsbD, PsbE, PsbF, PsbH, PsbI, PsbJ, PsbK, PsbL, PsbM, PsbT, PsbY, PsbZ, Psb30/Ycf12, at least 3 peripheral proteins of the oxygen-evolving complex and a large number of cofactors. It forms dimeric complexes.

Its subcellular location is the plastid. The protein resides in the chloroplast thylakoid membrane. Found at the monomer-monomer interface of the photosystem II (PS II) dimer, plays a role in assembly and dimerization of PSII. PSII is a light-driven water plastoquinone oxidoreductase, using light energy to abstract electrons from H(2)O, generating a proton gradient subsequently used for ATP formation. The polypeptide is Photosystem II reaction center protein T (Tetradesmus obliquus (Green alga)).